A 252-amino-acid chain; its full sequence is 7-carboxy-7-deazaguanine synthase (252 aa).

Substrate contacts are provided by residues Leu22–Gly24 and Arg37. The region spanning Phe28–Pro251 is the Radical SAM core domain. [4Fe-4S] cluster contacts are provided by Cys41, Cys45, and Cys48. Residue Thr102 coordinates substrate. Gly104 is an S-adenosyl-L-methionine binding site.

The protein belongs to the radical SAM superfamily. 7-carboxy-7-deazaguanine synthase family. In terms of assembly, homodimer. It depends on [4Fe-4S] cluster as a cofactor. The cofactor is S-adenosyl-L-methionine. Mg(2+) serves as cofactor.

It carries out the reaction 6-carboxy-5,6,7,8-tetrahydropterin + H(+) = 7-carboxy-7-deazaguanine + NH4(+). The protein operates within purine metabolism; 7-cyano-7-deazaguanine biosynthesis. Its function is as follows. Catalyzes the complex heterocyclic radical-mediated conversion of 6-carboxy-5,6,7,8-tetrahydropterin (CPH4) to 7-carboxy-7-deazaguanine (CDG), a step common to the biosynthetic pathways of all 7-deazapurine-containing compounds. This chain is 7-carboxy-7-deazaguanine synthase, found in Methanopyrus kandleri (strain AV19 / DSM 6324 / JCM 9639 / NBRC 100938).